Consider the following 412-residue polypeptide: Protein trichome birefringence-like 13 (412 aa).

Residues 9–29 form a helical; Signal-anchor for type II membrane protein membrane-spanning segment; it reads PSLFPLLSLLCFISIFLLLSL. Residues 137–139 carry the GDS motif motif; sequence GDS. A DCXHWCLPGXXDXWN motif motif is present at residues 385–399; sequence DCMHWCLPGLTDTWN.

The protein belongs to the PC-esterase family. TBL subfamily.

It is found in the membrane. In terms of biological role, may act as a bridging protein that binds pectin and other cell wall polysaccharides. Probably involved in maintaining esterification of pectins. May be involved in the specific O-acetylation of cell wall polymers. In Arabidopsis thaliana (Mouse-ear cress), this protein is Protein trichome birefringence-like 13 (TBL13).